The primary structure comprises 799 residues: Protein scabrous (799 aa).

An N-terminal signal peptide occupies residues 1 to 51 (MRDWQTFPDLQKKKVSRDHLNCPATMAGSNVLWPILLAVVLLQISVAFVSG). The disordered stretch occupies residues 287 to 316 (TRKDGSSASVEEESGSQEANQEQTGLETTA). Asparagine 372 carries N-linked (GlcNAc...) asparagine glycosylation. Residues 489-498 (LNKPHKRPHH) are compositionally biased toward basic residues. Residues 489 to 509 (LNKPHKRPHHQNVQAQMPQDD) are disordered. The 205-residue stretch at 533 to 737 (AIINKLPHDC…SSRMLVKRLP (205 aa)) folds into the Fibrinogen C-terminal domain. Cysteines 542 and 568 form a disulfide. 3 N-linked (GlcNAc...) asparagine glycosylation sites follow: asparagine 587, asparagine 618, and asparagine 660. A disulfide bridge links cysteine 687 with cysteine 700. N-linked (GlcNAc...) asparagine glycans are attached at residues asparagine 744 and asparagine 787.

In terms of processing, possesses five pairs of dibasic residues that may be the target of proteolytic processing.

The protein localises to the late endosome. In terms of biological role, involved in regulation of neurogenesis. May encode a lateral inhibitor of R8 differentiation. In conjunction with Gp150, promotes Notch activation in response to Delta by regulating acquisition of insensitivity to Delta in a subset of cells. The chain is Protein scabrous (sca) from Drosophila melanogaster (Fruit fly).